Here is a 202-residue protein sequence, read N- to C-terminus: Venom allergen 5 (202 aa).

Disulfide bonds link cysteine 4/cysteine 16, cysteine 8/cysteine 101, and cysteine 26/cysteine 94. A Phosphotyrosine modification is found at tyrosine 107. N-linked (Glc) (glycation) lysine glycosylation occurs at lysine 138. An intrachain disulfide couples cysteine 168 to cysteine 185.

It belongs to the CRISP family. In terms of tissue distribution, expressed by the venom gland.

It localises to the secreted. Functionally, does not show toxicity when intravenously injected into mice tail. The protein is Venom allergen 5 of Vespa velutina (Asian yellow-legged hornet).